The primary structure comprises 150 residues: Small heat shock protein IbpB (150 aa).

Residues 26–137 form the sHSP domain; the sequence is SQEPIDFPPY…QPQRIAIGGG (112 aa).

The protein belongs to the small heat shock protein (HSP20) family. Homodimer. Forms homomultimers of about 100-150 subunits at optimal growth temperatures. Conformation changes to oligomers at high temperatures or high ionic concentrations. The decrease in size of the multimers is accompanied by an increase in chaperone activity.

The protein localises to the cytoplasm. Its function is as follows. Associates with aggregated proteins, together with IbpA, to stabilize and protect them from irreversible denaturation and extensive proteolysis during heat shock and oxidative stress. Aggregated proteins bound to the IbpAB complex are more efficiently refolded and reactivated by the ATP-dependent chaperone systems ClpB and DnaK/DnaJ/GrpE. Its activity is ATP-independent. The chain is Small heat shock protein IbpB from Pectobacterium atrosepticum (strain SCRI 1043 / ATCC BAA-672) (Erwinia carotovora subsp. atroseptica).